The primary structure comprises 445 residues: Phosphoglucosamine mutase (445 aa).

Residue S102 is the Phosphoserine intermediate of the active site. Positions 102, 241, 243, and 245 each coordinate Mg(2+). S102 is subject to Phosphoserine.

Belongs to the phosphohexose mutase family. Mg(2+) serves as cofactor. In terms of processing, activated by phosphorylation.

It catalyses the reaction alpha-D-glucosamine 1-phosphate = D-glucosamine 6-phosphate. Catalyzes the conversion of glucosamine-6-phosphate to glucosamine-1-phosphate. The polypeptide is Phosphoglucosamine mutase (Escherichia coli O127:H6 (strain E2348/69 / EPEC)).